Here is a 69-residue protein sequence, read N- to C-terminus: Bacteriocin microcin B17 (69 aa).

A propeptide spanning residues 1–26 (MELKASEFGVVLSVDALKLSRQSPLG) is cleaved from the precursor. The oxazole-4-carboxylic acid (Gly-Ser) cross-link spans 39–40 (GS). Residues 40 to 41 (SC) constitute a cross-link (thiazole-4-carboxylic acid (Ser-Cys)). 3 consecutive cross-links (thiazole-4-carboxylic acid (Gly-Cys)) follow at residues 47–48 (GC), 50–51 (GC), and 54–55 (GC). The oxazole-4-carboxylic acid (Cys-Ser) cross-link spans 55–56 (CS). 2 cross-links (oxazole-4-carboxylic acid (Gly-Ser)) span residues 61–62 (GS) and 64–65 (GS).

Post-translationally, the processed N-terminus does not resemble a typical secretion signal sequence. Maturation of thiazole and oxazole containing antibiotics involves the enzymatic condensation of a Cys, Ser or Thr with the alpha-carbonyl of the preceding amino acid to form a thioether or ether bond, then dehydration to form a double bond with the alpha-amino nitrogen. Thiazoline or oxazoline rings are dehydrogenated to form thiazole or oxazole rings.

Its function is as follows. This glycine-rich peptide antibiotic inhibits DNA replication in many enteric bacteria, that leads to induction of the SOS repair system, massive DNA degradation and cell death. B17 inhibits type II topoisomerase by trapping an enzyme - DNA cleavable complex. This is Bacteriocin microcin B17 (mcbA) from Escherichia coli.